A 171-amino-acid polypeptide reads, in one-letter code: 3-hydroxydecanoyl-[acyl-carrier-protein] dehydratase (171 aa).

The active site involves His-70.

It belongs to the thioester dehydratase family. FabA subfamily. Homodimer.

Its subcellular location is the cytoplasm. It carries out the reaction a (3R)-hydroxyacyl-[ACP] = a (2E)-enoyl-[ACP] + H2O. The catalysed reaction is (3R)-hydroxydecanoyl-[ACP] = (2E)-decenoyl-[ACP] + H2O. The enzyme catalyses (2E)-decenoyl-[ACP] = (3Z)-decenoyl-[ACP]. The protein operates within lipid metabolism; fatty acid biosynthesis. In terms of biological role, necessary for the introduction of cis unsaturation into fatty acids. Catalyzes the dehydration of (3R)-3-hydroxydecanoyl-ACP to E-(2)-decenoyl-ACP and then its isomerization to Z-(3)-decenoyl-ACP. Can catalyze the dehydratase reaction for beta-hydroxyacyl-ACPs with saturated chain lengths up to 16:0, being most active on intermediate chain length. The chain is 3-hydroxydecanoyl-[acyl-carrier-protein] dehydratase from Mesorhizobium japonicum (strain LMG 29417 / CECT 9101 / MAFF 303099) (Mesorhizobium loti (strain MAFF 303099)).